A 305-amino-acid polypeptide reads, in one-letter code: Porphobilinogen deaminase (305 aa).

Cysteine 241 bears the S-(dipyrrolylmethanemethyl)cysteine mark.

The protein belongs to the HMBS family. As to quaternary structure, monomer. Dipyrromethane is required as a cofactor.

The enzyme catalyses 4 porphobilinogen + H2O = hydroxymethylbilane + 4 NH4(+). It functions in the pathway porphyrin-containing compound metabolism; protoporphyrin-IX biosynthesis; coproporphyrinogen-III from 5-aminolevulinate: step 2/4. Tetrapolymerization of the monopyrrole PBG into the hydroxymethylbilane pre-uroporphyrinogen in several discrete steps. The sequence is that of Porphobilinogen deaminase from Exiguobacterium sp. (strain ATCC BAA-1283 / AT1b).